A 202-amino-acid chain; its full sequence is Snake venom metalloproteinase fibrolase (202 aa).

The 197-residue stretch at 6–202 (RYIELVIVAD…HNPQCILNQP (197 aa)) folds into the Peptidase M12B domain. Position 9 (Glu-9) interacts with Ca(2+). Asn-25 carries N-linked (GlcNAc...) asparagine glycosylation. A Ca(2+)-binding site is contributed by Asp-93. 3 cysteine pairs are disulfide-bonded: Cys-117–Cys-197, Cys-157–Cys-181, and Cys-159–Cys-164. His-142 is a binding site for Zn(2+). Glu-143 is a catalytic residue. Positions 146 and 152 each coordinate Zn(2+). Cys-197 and Asn-200 together coordinate Ca(2+).

This sequence belongs to the venom metalloproteinase (M12B) family. P-I subfamily. As to quaternary structure, monomer. Zn(2+) serves as cofactor. In terms of processing, glycosylated. In terms of tissue distribution, expressed by the venom gland.

The protein resides in the secreted. The catalysed reaction is Hydrolysis of 14-Ala-|-Leu-15 in insulin B chain and 413-Lys-|-Leu-414 in alpha-chain of fibrinogen.. With respect to regulation, activated by calcium and magnesium ions. Inhibited by EDTA, DTT and L-cysteine. Activity is not affected by PMSF or heparin. Functionally, has fibrino(geno)lytic activity on the alpha and beta chains of fibrinogen (FGA and FGB). Inhibits human ADP- and collagen-induced platelet aggregation on platelet-rich plasma but does not affect the thrombin-induced aggregation of rabbit washed platelets. Slightly degrades plasminogen. In Macrovipera lebetinus (Levantine viper), this protein is Snake venom metalloproteinase fibrolase.